The chain runs to 299 residues: Putative cuticle collagen 155 (299 aa).

The first 27 residues, 1–27 (MEFEQRIKAYRFVAYSAVAFSVVAVLS), serve as a signal peptide directing secretion. 4 triple-helical region regions span residues 103-132 (GAAG…PGHP), 151-177 (GPPG…PGQD), 181-202 (GAPG…GAPG), and 216-278 (GAPG…VGEK). Positions 107–278 (PAGTPGKPGR…SGTPGGVGEK (172 aa)) are disordered. Residues 129 to 161 (PGHPPQQPCDPITPPPCQPCPQGPPGPPGPPGP) are compositionally biased toward pro residues. A compositionally biased stretch (gly residues) spans 163 to 172 (GDAGGNGNPG). Residues 173 to 197 (SPGQDGQPGAPGNKGPSGPNGNPGA) are compositionally biased toward low complexity. The segment covering 215–233 (PGAPGPQGTPGPQGPPGQP) has biased composition (pro residues). Residues 250–268 (PNGNPGQPGADGNPGAPGQ) show a composition bias toward low complexity.

Belongs to the cuticular collagen family. As to quaternary structure, collagen polypeptide chains are complexed within the cuticle by disulfide bonds and other types of covalent cross-links.

In terms of biological role, nematode cuticles are composed largely of collagen-like proteins. The cuticle functions both as an exoskeleton and as a barrier to protect the worm from its environment. This Caenorhabditis elegans protein is Putative cuticle collagen 155 (col-155).